Consider the following 263-residue polypeptide: uncharacterized protein (263 aa).

Residue 17-41 (GGGRGLGAAIALAFAQAGADVLIAS) coordinates NAD(+). Substrate is bound at residue serine 147. Tyrosine 160 (proton acceptor) is an active-site residue. Lysine 164 is an NAD(+) binding site.

The protein belongs to the short-chain dehydrogenases/reductases (SDR) family.

This is an uncharacterized protein from Mycobacterium tuberculosis (strain CDC 1551 / Oshkosh).